Here is a 338-residue protein sequence, read N- to C-terminus: Secretion system apparatus protein SsaL (338 aa).

The sequence is that of Secretion system apparatus protein SsaL (ssaL) from Salmonella typhimurium (strain LT2 / SGSC1412 / ATCC 700720).